The chain runs to 155 residues: UPF0260 protein R01011 (155 aa).

This sequence belongs to the UPF0260 family.

The sequence is that of UPF0260 protein R01011 from Rhizobium meliloti (strain 1021) (Ensifer meliloti).